The primary structure comprises 228 residues: ATP phosphoribosyltransferase (228 aa).

This sequence belongs to the ATP phosphoribosyltransferase family. Short subfamily. In terms of assembly, heteromultimer composed of HisG and HisZ subunits.

The protein resides in the cytoplasm. It catalyses the reaction 1-(5-phospho-beta-D-ribosyl)-ATP + diphosphate = 5-phospho-alpha-D-ribose 1-diphosphate + ATP. The protein operates within amino-acid biosynthesis; L-histidine biosynthesis; L-histidine from 5-phospho-alpha-D-ribose 1-diphosphate: step 1/9. In terms of biological role, catalyzes the condensation of ATP and 5-phosphoribose 1-diphosphate to form N'-(5'-phosphoribosyl)-ATP (PR-ATP). Has a crucial role in the pathway because the rate of histidine biosynthesis seems to be controlled primarily by regulation of HisG enzymatic activity. The sequence is that of ATP phosphoribosyltransferase from Moorella thermoacetica (strain ATCC 39073 / JCM 9320).